A 766-amino-acid chain; its full sequence is Pentatricopeptide repeat-containing protein At3g61520, mitochondrial (766 aa).

The transit peptide at 1–30 (MSIMLSISRRRNSYILLNHSRFLRRFSYDV) directs the protein to the mitochondrion. 16 PPR repeats span residues 151 to 181 (TVVA…LDSN), 184 to 218 (NSQV…ESVF), 221 to 257 (NRIT…GVSP), 258 to 292 (NSVW…KTPL), 293 to 327 (EAPP…KIRP), 328 to 358 (DVVT…MRGK), 369 to 404 (DSIH…RCAP), 405 to 439 (NAVT…EIKP), 440 to 474 (NVVT…GVKG), 475 to 509 (NVVT…GCSP), 510 to 544 (DAKI…GFSL), 545 to 579 (DLLA…GKKP), 580 to 614 (DSIT…GLDP), 615 to 650 (TVTT…KVNP), 651 to 685 (NTVI…MVRP), and 686 to 720 (NVET…SCEP).

It belongs to the PPR family. P subfamily.

It is found in the mitochondrion. The polypeptide is Pentatricopeptide repeat-containing protein At3g61520, mitochondrial (Arabidopsis thaliana (Mouse-ear cress)).